We begin with the raw amino-acid sequence, 526 residues long: Probable carboxypeptidase 2 (526 aa).

Residues 1 to 21 form the signal peptide; sequence MVAYRLLALISLGLGSHCASA. Asn-46 is a glycosylation site (N-linked (GlcNAc...) asparagine). Residues 53 to 76 form a disordered region; it reads PAFTSPGTVPRGFSDGTSGPTRDE. The region spanning 71–351 is the Peptidase M14 domain; the sequence is GPTRDETMEG…VMAKSILQTA (281 aa). Asn-116 is a glycosylation site (N-linked (GlcNAc...) asparagine). Residues His-136, Glu-139, and His-224 each contribute to the Zn(2+) site. Glu-322 serves as the catalytic Proton donor/acceptor. N-linked (GlcNAc...) asparagine glycans are attached at residues Asn-393 and Asn-459.

This sequence belongs to the peptidase M14 family. It depends on Zn(2+) as a cofactor.

It is found in the secreted. Extracellular metalloprotease that contributes to pathogenicity. In Arthroderma benhamiae (strain ATCC MYA-4681 / CBS 112371) (Trichophyton mentagrophytes), this protein is Probable carboxypeptidase 2 (MCPB).